The chain runs to 116 residues: Protein Rev (116 aa).

2 positions are modified to phosphoserine; by host CK2: S5 and S8. Positions 18-26 (LIKFLYQSN) are homomultimerization. The tract at residues 23-48 (YQSNPPPKPEGTRQARRNRRRRWRER) is disordered. A Nuclear localization signal and RNA-binding (RRE) motif is present at residues 34 to 50 (TRQARRNRRRRWRERQR). Positions 36–47 (QARRNRRRRWRE) are enriched in basic residues. The Nuclear export signal and binding to XPO1 signature appears at 73–84 (LQLPPLERLTLD). Phosphoserine; by host is present on residues S92 and S99. The interval 92-116 (SGTQGVGSPQILVESPTVLESGTKE) is disordered.

Belongs to the HIV-1 REV protein family. As to quaternary structure, homomultimer; when bound to the RRE. Multimeric assembly is essential for activity and may involve XPO1. Binds to human KPNB1, XPO1, TNPO1, RANBP5 and IPO7. Interacts with the viral Integrase. Interacts with human KHDRBS1. Interacts with human NAP1; this interaction decreases Rev multimerization and stimulates its activity. Interacts with human DEAD-box helicases DDX3 and DDX24; these interactions may serve for viral RNA export to the cytoplasm and packaging, respectively. Interacts with human PSIP1; this interaction may inhibit HIV-1 DNA integration by promoting dissociation of the Integrase-LEDGF/p75 complex. Asymmetrically arginine dimethylated at one site by host PRMT6. Methylation impairs the RNA-binding activity and export of viral RNA from the nucleus to the cytoplasm. In terms of processing, phosphorylated by protein kinase CK2. Presence of, and maybe binding to the N-terminus of the regulatory beta subunit of CK2 is necessary for CK2-mediated Rev's phosphorylation.

The protein resides in the host nucleus. It localises to the host nucleolus. Its subcellular location is the host cytoplasm. Functionally, escorts unspliced or incompletely spliced viral pre-mRNAs (late transcripts) out of the nucleus of infected cells. These pre-mRNAs carry a recognition sequence called Rev responsive element (RRE) located in the env gene, that is not present in fully spliced viral mRNAs (early transcripts). This function is essential since most viral proteins are translated from unspliced or partially spliced pre-mRNAs which cannot exit the nucleus by the pathway used by fully processed cellular mRNAs. Rev itself is translated from a fully spliced mRNA that readily exits the nucleus. Rev's nuclear localization signal (NLS) binds directly to KPNB1/Importin beta-1 without previous binding to KPNA1/Importin alpha-1. KPNB1 binds to the GDP bound form of RAN (Ran-GDP) and targets Rev to the nucleus. In the nucleus, the conversion from Ran-GDP to Ran-GTP dissociates Rev from KPNB1 and allows Rev's binding to the RRE in viral pre-mRNAs. Rev multimerization on the RRE via cooperative assembly exposes its nuclear export signal (NES) to the surface. Rev can then form a complex with XPO1/CRM1 and Ran-GTP, leading to nuclear export of the complex. Conversion from Ran-GTP to Ran-GDP mediates dissociation of the Rev/RRE/XPO1/RAN complex, so that Rev can return to the nucleus for a subsequent round of export. Beside KPNB1, also seems to interact with TNPO1/Transportin-1, RANBP5/IPO5 and IPO7/RANBP7 for nuclear import. The nucleoporin-like HRB/RIP is an essential cofactor that probably indirectly interacts with Rev to release HIV RNAs from the perinuclear region to the cytoplasm. In Human immunodeficiency virus type 1 group M subtype B (isolate SC) (HIV-1), this protein is Protein Rev.